Consider the following 203-residue polypeptide: Galactoside O-acetyltransferase (203 aa).

Substrate-binding residues include aspartate 17, serine 71, asparagine 85, and aspartate 93. Asparagine 85 provides a ligand contact to acetyl-CoA. The active-site Proton donor/acceptor is histidine 115. Residues serine 142, alanine 160, 165–166 (TK), arginine 180, and arginine 183 contribute to the acetyl-CoA site.

Belongs to the transferase hexapeptide repeat family. In terms of assembly, homotrimer. In terms of processing, the N-terminus of this protein is heterogeneous because the initiator methionine is only partially cleaved.

It is found in the cytoplasm. The catalysed reaction is a beta-D-galactoside + acetyl-CoA = a 6-acetyl-beta-D-galactoside + CoA. In terms of biological role, catalyzes the CoA-dependent transfer of an acetyl group to the 6-O-methyl position of a range of galactosides, glucosides, and lactosides. May assist cellular detoxification by acetylating non-metabolizable pyranosides, thereby preventing their reentry into the cell. This Escherichia coli (strain K12) protein is Galactoside O-acetyltransferase (lacA).